A 353-amino-acid chain; its full sequence is 3-dehydroquinate synthase (353 aa).

NAD(+)-binding positions include 60–65, 94–98, 118–119, lysine 131, and lysine 140; these read AGDMNK, GMITD, and TT. Positions 173, 234, and 253 each coordinate Zn(2+).

The protein belongs to the sugar phosphate cyclases superfamily. Dehydroquinate synthase family. NAD(+) serves as cofactor. It depends on Co(2+) as a cofactor. The cofactor is Zn(2+).

Its subcellular location is the cytoplasm. It carries out the reaction 7-phospho-2-dehydro-3-deoxy-D-arabino-heptonate = 3-dehydroquinate + phosphate. The protein operates within metabolic intermediate biosynthesis; chorismate biosynthesis; chorismate from D-erythrose 4-phosphate and phosphoenolpyruvate: step 2/7. In terms of biological role, catalyzes the conversion of 3-deoxy-D-arabino-heptulosonate 7-phosphate (DAHP) to dehydroquinate (DHQ). The protein is 3-dehydroquinate synthase of Parabacteroides distasonis (strain ATCC 8503 / DSM 20701 / CIP 104284 / JCM 5825 / NCTC 11152).